Consider the following 592-residue polypeptide: Arginine--tRNA ligase (592 aa).

The short motif at 134–144 is the 'HIGH' region element; that stretch reads ANPTGPLHVGH.

Belongs to the class-I aminoacyl-tRNA synthetase family. Monomer.

The protein resides in the cytoplasm. The catalysed reaction is tRNA(Arg) + L-arginine + ATP = L-arginyl-tRNA(Arg) + AMP + diphosphate. This chain is Arginine--tRNA ligase, found in Coxiella burnetii (strain CbuG_Q212) (Coxiella burnetii (strain Q212)).